The primary structure comprises 669 residues: Dymeclin (669 aa).

G2 carries the N-myristoyl glycine lipid modification.

It belongs to the dymeclin family. In terms of processing, myristoylated in vitro; myristoylation is not essential for protein targeting to Golgi compartment.

Its subcellular location is the cytoplasm. The protein resides in the golgi apparatus. In terms of biological role, necessary for correct organization of Golgi apparatus. This chain is Dymeclin (DYM), found in Gallus gallus (Chicken).